The chain runs to 241 residues: MQNNNDILKAQSPAALAEEYIVKSIWQDVFPAGSNLPSERDLADKIGVTRTTLREVLQRLARDGWLTIQHGKPTKVNNIWDAAGPNIIETLIALDMQSAPLIIDNMLSLRSKMSESYIYEAVKNSPQKSTALFAELEQLQNTAQDYTEFDYQLFRQFTVVANKPFYRLIFNSLKGVYQRIGLLFFKEKTHRELTKQFYLEMQQICLEGNADAVVDCIRKHNLRSSTYWKAILERLPQNLSD.

The HTH gntR-type domain occupies 11 to 79 (QSPAALAEEY…HGKPTKVNNI (69 aa)). A DNA-binding region (H-T-H motif) is located at residues 39–58 (ERDLADKIGVTRTTLREVLQ).

As to quaternary structure, homodimer.

Its subcellular location is the cytoplasm. In terms of biological role, multifunctional regulator of fatty acid metabolism. The sequence is that of Fatty acid metabolism regulator protein from Haemophilus influenzae (strain PittEE).